The chain runs to 809 residues: MAVSKFTLHNAPTTGGSNEAAVVFPWNTPKKAVNPYLDPAEVAPESALSNLIALYAADNEQEQLRRETLSDEVWERYFFNESRDPVQREIEQDRLISHAKTAREQQRFNPDLVIIADVGAQPAHISKPLLERIKYFHSLGRAKAYSRYLRETIRPCLERLERVRDSQVSASFRFMASHDGLEGLLVLPEMNQDQVKRLSTLVAAHMSMCLDAACGDLFVSDDVKPEEIRQAWERVAAEAMRLEVIPPAFEQLRRKKRRRKPVPYELIPPSLARMLCADWWCRKLWQMRCEWREEQLRAVCLVNKKASPYVSYEAVIHKREQRRKSLEFFRSHELINEDGDTLDMEDVVNASNSNPAHRRNEMMACVKGLELIAEMRGDCAVFYTITCPSRFHATLNNGRPNPKWTSATVRQSSDYLVDTFAAFRKAMHKTGLRWYGVRVAEPHHDGTVHWHLLCFMRKKDRRSITALLRKFAIREDREELGTNTGPRFKSELINPRKGTPTSYIAKYISKNIDGRGLAKEISKETGRPLRDSAEHVSAWASLHRVQQFRFFGIPGRQAYRELRLLAGQAARVQGERKAGAPVLDNPRLDAVLAAADAGCFATYIMKQGGVLVPRKHHLVRTAYELNDEPSAYGDHGIRIYGIWSPIAEGKICTHAMKWKKVRKAVDVQEAAADQGACAPWTRGNNCPLAENLNQQEKDKSADGGTRTDITRMDDKELHDYLYSMSKKDRRELAARLRLVKPKRRKDYKQRITDHQHQQLVYELKSRGFDGSEKEVDLLLRGGSIPSGAGLRIFYRNQRLKEDDKWRNQY.

Active-site O-(5'-phospho-DNA)-tyrosine intermediate residues include Y503 and Y507.

The protein belongs to the phage GPA family.

Possible endonuclease which induces a single-strand cut and initiates DNA replication. This is Probable replication endonuclease from prophage-like region from Salmonella typhimurium (strain LT2 / SGSC1412 / ATCC 700720).